The following is a 455-amino-acid chain: Probable glycine dehydrogenase (decarboxylating) subunit 1 (455 aa).

The protein belongs to the GcvP family. N-terminal subunit subfamily. The glycine cleavage system is composed of four proteins: P, T, L and H. In this organism, the P 'protein' is a heterodimer of two subunits.

The catalysed reaction is N(6)-[(R)-lipoyl]-L-lysyl-[glycine-cleavage complex H protein] + glycine + H(+) = N(6)-[(R)-S(8)-aminomethyldihydrolipoyl]-L-lysyl-[glycine-cleavage complex H protein] + CO2. Functionally, the glycine cleavage system catalyzes the degradation of glycine. The P protein binds the alpha-amino group of glycine through its pyridoxal phosphate cofactor; CO(2) is released and the remaining methylamine moiety is then transferred to the lipoamide cofactor of the H protein. The sequence is that of Probable glycine dehydrogenase (decarboxylating) subunit 1 from Saccharolobus islandicus (strain Y.N.15.51 / Yellowstone #2) (Sulfolobus islandicus).